Consider the following 200-residue polypeptide: Trem-like transcript 4 protein (200 aa).

A signal peptide spans 1–25; that stretch reads MAWGGVHTCCFHLCCCCSWPQGAVP. The 101-residue stretch at 26–126 folds into the Ig-like V-type domain; sequence EELHKHPGQT…NIITVLRNIS (101 aa). An intrachain disulfide couples Cys-40 to Cys-109. A glycan (N-linked (GlcNAc...) asparagine) is linked at Asn-93.

It localises to the secreted. Positively regulates Toll-like receptor TLR7 signaling in macrophages. The sequence is that of Trem-like transcript 4 protein (TREML4) from Homo sapiens (Human).